Consider the following 136-residue polypeptide: MNSQIKNKAVYWGTGRRKTSVARVRLIPGNGLIKINGRSGDDYLNFNPLHLNSIKAPLQTLGLENSYDILVNVFGGGLTGQADAIKQGAARALCELSPDNRKPLKTEGHLSRDPRAKERRKYGLKKARKAPQFSKR.

The interval 97-136 (SPDNRKPLKTEGHLSRDPRAKERRKYGLKKARKAPQFSKR) is disordered. A compositionally biased stretch (basic and acidic residues) spans 98 to 116 (PDNRKPLKTEGHLSRDPRA). Basic residues predominate over residues 117–136 (KERRKYGLKKARKAPQFSKR).

Belongs to the universal ribosomal protein uS9 family.

The sequence is that of Small ribosomal subunit protein uS9 from Prochlorococcus marinus (strain AS9601).